Consider the following 524-residue polypeptide: Solute carrier family 2, facilitated glucose transporter member 2 (524 aa).

Residues methionine 1–isoleucine 6 lie on the Cytoplasmic side of the membrane. The helical transmembrane segment at threonine 7 to tyrosine 26 threads the bilayer. Over aspartate 27–serine 89 the chain is Extracellular. N-linked (GlcNAc...) asparagine glycosylation is present at asparagine 62. Residues alanine 90–glycine 115 traverse the membrane as a helical segment. The Cytoplasmic segment spans residues glycine 116–lysine 126. A helical membrane pass occupies residues alanine 127–serine 145. Over lysine 146–serine 150 the chain is Extracellular. A helical membrane pass occupies residues histidine 151–isoleucine 176. The Cytoplasmic segment spans residues glycine 177 to alanine 187. Residues isoleucine 188–leucine 211 traverse the membrane as a helical segment. Position 193 (glutamine 193) interacts with D-glucose. Residues leucine 212–glutamate 216 lie on the Extracellular side of the membrane. Residues leucine 217–cysteine 239 traverse the membrane as a helical segment. Residues proline 240 to proline 303 are Cytoplasmic-facing. The helical transmembrane segment at isoleucine 304–threonine 327 threads the bilayer. D-glucose contacts are provided by residues glutamine 314–glutamine 315 and asparagine 320. The Extracellular segment spans residues serine 328–proline 338. A helical transmembrane segment spans residues valine 339–valine 360. Asparagine 349 is a binding site for D-glucose. At glutamate 361 to arginine 366 the chain is on the cytoplasmic side. A helical membrane pass occupies residues serine 367 to leucine 389. Residues leucine 390–proline 394 lie on the Extracellular side of the membrane. Residues tryptophan 395–isoleucine 413 form a helical membrane-spanning segment. 2 residues coordinate D-glucose: glutamate 412 and tryptophan 420. Residues glycine 414 to proline 433 are Cytoplasmic-facing. Residues alanine 434–alanine 458 form a helical membrane-spanning segment. The Extracellular segment spans residues aspartate 459–proline 463. Residues tyrosine 464–phenylalanine 482 traverse the membrane as a helical segment. Topologically, residues lysine 483–valine 524 are cytoplasmic. The residue at position 523 (threonine 523) is a Phosphothreonine.

It belongs to the major facilitator superfamily. Sugar transporter (TC 2.A.1.1) family. Glucose transporter subfamily. N-glycosylated; required for stability and retention at the cell surface of pancreatic beta cells.

It localises to the cell membrane. It carries out the reaction D-glucose(out) = D-glucose(in). The catalysed reaction is D-fructose(out) = D-fructose(in). The enzyme catalyses L-dehydroascorbate(out) = L-dehydroascorbate(in). It catalyses the reaction D-galactose(in) = D-galactose(out). With respect to regulation, D-glucose and maltose competitively inhibit fructose transport. D-glucose, D-fructose and maltose inhibit deoxyglucose transport. Facilitative hexose transporter that mediates the transport of glucose, fructose and galactose. Likely mediates the bidirectional transfer of glucose across the plasma membrane of hepatocytes and is responsible for uptake of glucose by the beta cells; may comprise part of the glucose-sensing mechanism of the beta cell. May also participate with the Na(+)/glucose cotransporter in the transcellular transport of glucose in the small intestine and kidney. Also able to mediate the transport of dehydroascorbate. The sequence is that of Solute carrier family 2, facilitated glucose transporter member 2 from Sus scrofa (Pig).